The sequence spans 73 residues: U-scoloptoxin(15)-Sm2a (73 aa).

A signal peptide spans 1-20; the sequence is MKFYIVFCLFVVLLINFAAA. Disulfide bonds link Cys-39–Cys-66 and Cys-43–Cys-68.

It belongs to the scoloptoxin-15 family. As to expression, expressed by the venom gland.

It localises to the secreted. In terms of biological role, activity unknown, even that a lot of targets (Kv, Nav, Cav) have been tested and activities on insects and mice have been tested. This chain is U-scoloptoxin(15)-Sm2a, found in Scolopendra morsitans (Tanzanian blue ringleg centipede).